We begin with the raw amino-acid sequence, 334 residues long: Sensor protein BceS (334 aa).

The Cytoplasmic segment spans residues 1 to 12; sequence MIKAFLIERRSW. The helical transmembrane segment at 13-33 threads the bilayer; that stretch reads IAAFLFQQALMLFIAFVDPSI. A topological domain (extracellular) is located at residue S34. Residues 35–55 form a helical membrane-spanning segment; the sequence is FGNVLYMVYLCILFFIIFLWF. Residues 56–334 lie on the Cytoplasmic side of the membrane; sequence RYRKETAFYK…RNQFEHVISV (279 aa). A Histidine kinase domain is found at 121 to 326; it reads AWIHEVKTPL…VFTLTFPIRN (206 aa). H124 is subject to Phosphohistidine; by autocatalysis.

The protein localises to the cell membrane. The catalysed reaction is ATP + protein L-histidine = ADP + protein N-phospho-L-histidine.. Its function is as follows. Member of the two-component regulatory system BceS/BceR involved in the regulation of bacitracin resistance. Activates BceR in response to extracellular bacitracin. This is Sensor protein BceS (bceS) from Bacillus subtilis (strain 168).